A 260-amino-acid chain; its full sequence is Small ribosomal subunit protein bS6 (260 aa).

This sequence belongs to the bacterial ribosomal protein bS6 family.

Functionally, binds together with bS18 to 16S ribosomal RNA. The polypeptide is Small ribosomal subunit protein bS6 (Wolbachia sp. subsp. Brugia malayi (strain TRS)).